The sequence spans 250 residues: Probable aquaporin TIP-type (250 aa).

The next 2 membrane-spanning stretches (helical) occupy residues 22–42 (AGLA…GSGI) and 56–76 (AGLI…VSVG). An NPA 1 motif is present at residues 85 to 87 (NPA). 3 consecutive transmembrane segments (helical) span residues 104 to 124 (IVYI…LVFV), 138 to 158 (VGVG…VYTV), and 170 to 190 (IGII…LVGG). Positions 198–200 (NPA) match the NPA 2 motif. Residues 218 to 238 (YWAGPLIGGGIAGLVYEVLFI) traverse the membrane as a helical segment.

It belongs to the MIP/aquaporin (TC 1.A.8) family. TIP (TC 1.A.8.10) subfamily.

The protein resides in the membrane. In terms of biological role, aquaporins facilitate the transport of water and small neutral solutes across cell membranes. May have a role in buffering osmotic fluctations in the highly compartmented vacuole of arbuscule cells. This chain is Probable aquaporin TIP-type (AQP1), found in Medicago truncatula (Barrel medic).